We begin with the raw amino-acid sequence, 336 residues long: Phospho-N-acetylmuramoyl-pentapeptide-transferase (336 aa).

10 helical membrane passes run Leu3–Ile23, Gly53–Ile73, Ser78–Leu98, Leu118–Ile138, Val143–Val163, Gly174–Ala194, Phe200–Asn220, Val226–Ala246, Trp251–Val271, and Ala316–Phe336.

The protein belongs to the glycosyltransferase 4 family. MraY subfamily. Mg(2+) serves as cofactor.

It is found in the cell membrane. The enzyme catalyses UDP-N-acetyl-alpha-D-muramoyl-L-alanyl-gamma-D-glutamyl-L-lysyl-D-alanyl-D-alanine + di-trans,octa-cis-undecaprenyl phosphate = Mur2Ac(oyl-L-Ala-gamma-D-Glu-L-Lys-D-Ala-D-Ala)-di-trans,octa-cis-undecaprenyl diphosphate + UMP. It participates in cell wall biogenesis; peptidoglycan biosynthesis. Functionally, catalyzes the initial step of the lipid cycle reactions in the biosynthesis of the cell wall peptidoglycan: transfers peptidoglycan precursor phospho-MurNAc-pentapeptide from UDP-MurNAc-pentapeptide onto the lipid carrier undecaprenyl phosphate, yielding undecaprenyl-pyrophosphoryl-MurNAc-pentapeptide, known as lipid I. The polypeptide is Phospho-N-acetylmuramoyl-pentapeptide-transferase (Streptococcus pyogenes serotype M5 (strain Manfredo)).